The following is an 89-amino-acid chain: Small ribosomal subunit protein uS15 (89 aa).

It belongs to the universal ribosomal protein uS15 family. Part of the 30S ribosomal subunit. Forms a bridge to the 50S subunit in the 70S ribosome, contacting the 23S rRNA.

One of the primary rRNA binding proteins, it binds directly to 16S rRNA where it helps nucleate assembly of the platform of the 30S subunit by binding and bridging several RNA helices of the 16S rRNA. Functionally, forms an intersubunit bridge (bridge B4) with the 23S rRNA of the 50S subunit in the ribosome. The sequence is that of Small ribosomal subunit protein uS15 from Trichormus variabilis (strain ATCC 29413 / PCC 7937) (Anabaena variabilis).